We begin with the raw amino-acid sequence, 278 residues long: S-formylglutathione hydrolase YeiG (278 aa).

Active-site charge relay system residues include serine 145, aspartate 223, and histidine 256.

The protein belongs to the esterase D family.

It carries out the reaction S-formylglutathione + H2O = formate + glutathione + H(+). Its function is as follows. Serine hydrolase involved in the detoxification of formaldehyde. Hydrolyzes S-formylglutathione to glutathione and formate. The chain is S-formylglutathione hydrolase YeiG (yeiG) from Shigella flexneri serotype 5b (strain 8401).